Reading from the N-terminus, the 502-residue chain is Cytochrome P450 71A8 (502 aa).

A helical membrane pass occupies residues 16–36 (IISHTLAFQALVSLILLISIT). Residues 93 to 119 (PVSSRRRPRGNHENSRSRLRRPRGSRS) form a disordered region. Cys-447 is a heme binding site.

It belongs to the cytochrome P450 family. It depends on heme as a cofactor.

Its subcellular location is the membrane. In Mentha piperita (Peppermint), this protein is Cytochrome P450 71A8 (CYP71A8).